An 819-amino-acid polypeptide reads, in one-letter code: Advillin (819 aa).

Residues 1 to 731 (MSLSSAFRTV…YEQLKNELGD (731 aa)) form a core region. Residues 24–105 (MELVLVPLSA…VQYHESDTFR (82 aa)) form a Gelsolin-like 1 repeat. Tyr85 is modified (phosphotyrosine). A 1,2-diacyl-sn-glycero-3-phospho-(1D-myo-inositol-4,5-bisphosphate)-binding positions include 109–116 (KRGIIYKK) and 135–143 (RLLHVKGKR). 5 Gelsolin-like repeats span residues 144-215 (NIRA…KEAA), 265-339 (TEVA…SAMF), 407-486 (LVPV…RHFM), 524-592 (NTKA…PEFW), and 631-704 (TEVT…PPTF). The segment at 628-819 (FLVTEVTDFT…LQLKKEAGLF (192 aa)) is required for interaction with F-actin. The tract at residues 731–819 (DATAIVRITT…LQLKKEAGLF (89 aa)) is headpiece. The HP domain maps to 753 to 819 (ESGPKYYPVE…LQLKKEAGLF (67 aa)). Tyr758 carries the phosphotyrosine modification.

This sequence belongs to the villin/gelsolin family. As to quaternary structure, associates (via C-terminus) with actin. Interacts with F-actin. Interacts with SCARF1; the interaction occurs in embryonic dorsal root ganglions at 18 dpc and induces neurite-like outgrowth. Interacts with PLCE1. Interacts with ACTR2 and ACTR3; associates with the ARP2/3 complex. Expressed in dorsal root ganglion (DRG) neurons and superior cervical ganglia (SCG). Expressed in podocytes.

Its subcellular location is the cytoplasm. It localises to the cytoskeleton. The protein resides in the cell projection. It is found in the neuron projection. The protein localises to the axon. Its subcellular location is the lamellipodium. It localises to the cell junction. The protein resides in the focal adhesion. Functionally, ca(2+)-regulated actin-binding protein which plays an important role in actin bundling. May have a unique function in the morphogenesis of neuronal cells which form ganglia. Required for SREC1-mediated regulation of neurite-like outgrowth. Plays a role in regenerative sensory axon outgrowth and remodeling processes after peripheral injury in neonates. Involved in the formation of long fine actin-containing filopodia-like structures in fibroblast. Plays a role in ciliogenesis. In podocytes, controls lamellipodia formation through the regulation of EGF-induced diacylglycerol generation by PLCE1 and ARP2/3 complex assembly. The chain is Advillin from Rattus norvegicus (Rat).